Here is a 1407-residue protein sequence, read N- to C-terminus: DNA-directed RNA polymerase subunit beta' (1407 aa).

Cys-70, Cys-72, Cys-85, and Cys-88 together coordinate Zn(2+). Residues Asp-460, Asp-462, and Asp-464 each coordinate Mg(2+). Residues Cys-814, Cys-888, Cys-895, and Cys-898 each contribute to the Zn(2+) site. Lys-972 bears the N6-acetyllysine mark.

The protein belongs to the RNA polymerase beta' chain family. The RNAP catalytic core consists of 2 alpha, 1 beta, 1 beta' and 1 omega subunit. When a sigma factor is associated with the core the holoenzyme is formed, which can initiate transcription. The cofactor is Mg(2+). Zn(2+) serves as cofactor.

The catalysed reaction is RNA(n) + a ribonucleoside 5'-triphosphate = RNA(n+1) + diphosphate. DNA-dependent RNA polymerase catalyzes the transcription of DNA into RNA using the four ribonucleoside triphosphates as substrates. This is DNA-directed RNA polymerase subunit beta' from Escherichia coli O6:H1 (strain CFT073 / ATCC 700928 / UPEC).